The following is a 311-amino-acid chain: uncharacterized protein (311 aa).

This is an uncharacterized protein from Bacillus anthracis.